Here is a 235-residue protein sequence, read N- to C-terminus: Probable tetraspanin tspB (235 aa).

Topologically, residues 1–23 (MVDTTNLIPNTPRYLKVPLIAFN) are cytoplasmic. A helical membrane pass occupies residues 24 to 44 (TILWVLGLVLVIIGSIGVSFF). The Extracellular segment spans residues 45–68 (SNFKDFTKVSKASAALSNLTTGAP). N-linked (GlcNAc...) asparagine glycosylation is present at Asn-62. The helical transmembrane segment at 69–89 (AGVLVIGIFFVILTVIGCFVA) threads the bilayer. The Cytoplasmic segment spans residues 90–93 (GKEK). Residues 94 to 114 (LVGLVIYTMLMLIILVALIGV) form a helical membrane-spanning segment. Over 115 to 200 (GGKALTLHND…ISSNLYLVGA (86 aa)) the chain is Extracellular. Residues Asn-143 and Asn-159 are each glycosylated (N-linked (GlcNAc...) asparagine). Residues 201 to 221 (AAVSIGVIEFICMLFALFLII) form a helical membrane-spanning segment. Over 222-235 (RICRAPRTKSYDYQ) the chain is Cytoplasmic.

Belongs to the tetraspanin (TM4SF) family.

It localises to the membrane. This is Probable tetraspanin tspB (tspB) from Dictyostelium discoideum (Social amoeba).